A 174-amino-acid chain; its full sequence is Small heat shock protein OV25-1 (174 aa).

Residues 50-161 form the sHSP domain; the sequence is LNECNIGNTL…ASRNIPIRAS (112 aa). Residues 153–174 are disordered; that stretch reads SRNIPIRASPKEPEAKQKTKKQ. The segment covering 161–174 has biased composition (basic and acidic residues); that stretch reads SPKEPEAKQKTKKQ.

This sequence belongs to the small heat shock protein (HSP20) family.

This chain is Small heat shock protein OV25-1 (OV25-1), found in Onchocerca volvulus.